A 494-amino-acid polypeptide reads, in one-letter code: Glutamyl-tRNA(Gln) amidotransferase subunit A (494 aa).

Active-site charge relay system residues include Lys79 and Ser154. Ser178 serves as the catalytic Acyl-ester intermediate.

This sequence belongs to the amidase family. GatA subfamily. As to quaternary structure, heterotrimer of A, B and C subunits.

It carries out the reaction L-glutamyl-tRNA(Gln) + L-glutamine + ATP + H2O = L-glutaminyl-tRNA(Gln) + L-glutamate + ADP + phosphate + H(+). Its function is as follows. Allows the formation of correctly charged Gln-tRNA(Gln) through the transamidation of misacylated Glu-tRNA(Gln) in organisms which lack glutaminyl-tRNA synthetase. The reaction takes place in the presence of glutamine and ATP through an activated gamma-phospho-Glu-tRNA(Gln). The sequence is that of Glutamyl-tRNA(Gln) amidotransferase subunit A from Clostridium kluyveri (strain NBRC 12016).